Here is an 824-residue protein sequence, read N- to C-terminus: Translation initiation factor IF-2 (824 aa).

Disordered regions lie at residues 1–32 and 45–232; these read MSDTDGKKTLGLRGGAPRPGNVKQSFSHGRTK and VPKA…MGGQ. Positions 45–57 are enriched in low complexity; the sequence is VPKAGATTSAGGK. The span at 86 to 144 shows a compositional bias: basic and acidic residues; sequence KAREAEEEAARIAEEKARAEERERRRAEQEERERAEREREESLKAKAEEDKRRKDEAEA. Positions 145-167 are enriched in low complexity; the sequence is AAKAAAAPAAEPVVQRPAAKAAP. Basic and acidic residues predominate over residues 170–193; the sequence is APRKQQDRDRDNKRGGKGNDDSRR. The region spanning 321 to 489 is the tr-type G domain; that stretch reads TRPPVVTIMG…AIALQAEILE (169 aa). The tract at residues 330-337 is G1; that stretch reads GHVDHGKT. A GTP-binding site is contributed by 330 to 337; the sequence is GHVDHGKT. Positions 355–359 are G2; that stretch reads GITQH. Residues 377–380 are G3; the sequence is DTPG. GTP is bound by residues 377-381 and 431-434; these read DTPGH and NKID. A G4 region spans residues 431–434; the sequence is NKID. Positions 467 to 469 are G5; the sequence is SAI.

The protein belongs to the TRAFAC class translation factor GTPase superfamily. Classic translation factor GTPase family. IF-2 subfamily.

The protein resides in the cytoplasm. Its function is as follows. One of the essential components for the initiation of protein synthesis. Protects formylmethionyl-tRNA from spontaneous hydrolysis and promotes its binding to the 30S ribosomal subunits. Also involved in the hydrolysis of GTP during the formation of the 70S ribosomal complex. This Roseobacter denitrificans (strain ATCC 33942 / OCh 114) (Erythrobacter sp. (strain OCh 114)) protein is Translation initiation factor IF-2.